Consider the following 137-residue polypeptide: Ribosome-binding factor A (137 aa).

Belongs to the RbfA family. Monomer. Binds 30S ribosomal subunits, but not 50S ribosomal subunits or 70S ribosomes.

The protein localises to the cytoplasm. One of several proteins that assist in the late maturation steps of the functional core of the 30S ribosomal subunit. Associates with free 30S ribosomal subunits (but not with 30S subunits that are part of 70S ribosomes or polysomes). Required for efficient processing of 16S rRNA. May interact with the 5'-terminal helix region of 16S rRNA. The sequence is that of Ribosome-binding factor A from Nitrobacter winogradskyi (strain ATCC 25391 / DSM 10237 / CIP 104748 / NCIMB 11846 / Nb-255).